Consider the following 477-residue polypeptide: Pentatricopeptide repeat-containing protein At4g14170 (477 aa).

PPR repeat units follow at residues 65-96 (NVVLSSKLVLAYSKLNHLFPTSLSVFWHMPYR), 97-131 (NIFSWNIIIGEFSRSGFASKSIDLFLRMWRESCVR), 133-167 (DDFTLPLILRACSASREAKSGDLIHVLCLKLGFSS), 168-198 (SLFVSSALVIMYVDMGKLLHARKLFDDMPVR), 199-233 (DSVLYTAMFGGYVQQGEAMLGLAMFREMGYSGFAL), 234-264 (DSVVMVSLLMACGQLGALKHGKSVHGWCIRR), 269-299 (GLNLGNAITDMYVKCSILDYAHTVFVNMSRR), 300-334 (DVISWSSLILGYGLDGDVVMSFKLFDEMLKEGIEP), 335-369 (NAVTFLGVLSACAHGGLVEKSWLYFRLMQEYNIVP), and 370-400 (ELKHYASVADCMSRAGLLEEAEKFLEDMPVK). The segment at 405–477 (VMGAVLSGCK…ISKVPGCSSI (73 aa)) is type E motif; degenerate.

It belongs to the PPR family. PCMP-E subfamily.

The chain is Pentatricopeptide repeat-containing protein At4g14170 (PCMP-E17) from Arabidopsis thaliana (Mouse-ear cress).